A 71-amino-acid chain; its full sequence is Peptide Ctri9819 (71 aa).

The first 23 residues, 1–23 (MKTVSTVAILAIFLLIVITTIET), serve as a signal peptide directing secretion. Residue Leu-34 is modified to Leucine amide. Residues 38–71 (SKLETFKRIARTLSAGISAKRSLEDVNSLTGMSS) constitute a propeptide that is removed on maturation.

Belongs to the non-disulfide-bridged peptide (NDBP) superfamily. Short antimicrobial peptide (group 4) family. In terms of tissue distribution, expressed by the venom gland.

It localises to the secreted. Functionally, antimicrobial peptide. The sequence is that of Peptide Ctri9819 from Chaerilus tricostatus (Scorpion).